The primary structure comprises 268 residues: Gasdermin bGSDM (268 aa).

Residue C3 is the site of S-palmitoyl cysteine attachment. A run of 4 beta stranded transmembrane segments spans residues 78–94, 103–121, 168–185, and 195–211; these read IDLR…AAKI, APSF…FHIE, KMRM…GVDV, and AKLE…RLVF. The tract at residues 248–268 is C-terminal region; sequence GENMALNLFTEIQDAGFIEVT.

It belongs to the bacterial gasdermin family. In terms of assembly, monomer in solution. Forms large, homooligomeric ring-shaped pores when inserted in membranes. Post-translationally, cleavage by the adjacently encoded protease (G563DRAFT_02009) between Leu-247 and Gly-248 relieves autoinhibition, releasing the N-terminus which initiates loss of cell integrity. In terms of processing, palmitoylation helps stabilize the inactive state; may self-palmitoylate. Palmitoylation is not required for permeabilization of liposomes by the ring-like pores in vitro. Palmitoylation plays a significant role in pore formation.

It is found in the cytoplasm. The protein localises to the cell inner membrane. With respect to regulation, the full-length protein before cleavage is inactive: intramolecular interactions between the N-terminal domain and the C-terminal region, as well as the lipid modification, mediate autoinhibition. The pyroptosis-like-inducing activity is carried by the released N-terminal domain (gasdermin bGSDM, N-terminus). Its function is as follows. Precursor of a pore-forming protein involved in defense against bacteriophages. Cleavage of this precursor by its dedicated, neighboring protease (G563DRAFT_02009) releases the active moiety (gasdermin bGSDM, N-terminus) which inserts into membranes, forming pores and triggering cell death. Expression of bGSDM and its protease is highly toxic in E.coli. Cells expressing the gene pair stop dividing and lose membrane integrity. Both proteins are required to kill E.coli. In terms of biological role, pore-forming protein that causes membrane permeabilization via a pyroptosis-like activity. Makes ring-like pores with walls about 50 Angstroms thick and an interior pore diameter of 200-300 Angstroms, when integrated in liposomes. The chain is Gasdermin bGSDM from Runella zeae (strain ATCC BAA-293 / DSM 19591 / LMG 21438 / NS12).